Consider the following 340-residue polypeptide: Guanine nucleotide-binding protein G(I)/G(S)/G(T) subunit beta-3 (340 aa).

WD repeat units lie at residues 53 to 83 (GHLA…IVWD), 95 to 125 (LRSS…SIYN), 141 to 170 (AHTG…ALWD), 182 to 212 (GHTG…KLWD), 224 to 254 (GHES…RLFD), 268 to 298 (SIIC…NVWD), and 310 to 340 (GHDN…KIWN).

The protein belongs to the WD repeat G protein beta family. As to quaternary structure, g proteins are composed of 3 units, alpha, beta and gamma. Interacts with RASD2.

Functionally, guanine nucleotide-binding proteins (G proteins) are involved as a modulator or transducer in various transmembrane signaling systems. The beta and gamma chains are required for the GTPase activity, for replacement of GDP by GTP, and for G protein-effector interaction. The polypeptide is Guanine nucleotide-binding protein G(I)/G(S)/G(T) subunit beta-3 (GNB3) (Homo sapiens (Human)).